The sequence spans 484 residues: Ribosome biogenesis protein NOP53 (484 aa).

Disordered regions lie at residues 1-51 (MAAG…WRRL) and 304-356 (ESDG…AARK). The residue at position 2 (Ala2) is an N-acetylalanine. A Phosphoserine modification is found at Ser29. Basic residues predominate over residues 35 to 49 (RRRRRGPRNKKRGWR). Residues 148-437 (KEELWEKLAK…SELSGSLRTL (290 aa)) are mediates interaction with CDKN2A/isoform tumor suppressor ARF. Position 305 is a phosphoserine (Ser305). The span at 336 to 348 (PEKRMEKKTEQQR) shows a compositional bias: basic and acidic residues. The tract at residues 348–392 (RRREKAARKLRVQQAALRAARLQHQELFRLRGIKAQVARRLAELA) is mediates interaction with human herpesvirus 8 protein ORF16. 2 nucleolar localization signal regions span residues 353 to 401 (AARK…RRIR) and 402 to 484 (RLAE…EIQL).

The protein belongs to the NOP53 family. Homooligomer. Interacts with PTEN; regulates PTEN phosphorylation and increases its stability. Interacts with RPL11; retains RPL11 into the nucleolus. Interacts with CDKN2A/isoform tumor suppressor ARF; the interaction is direct and promotes ARF nucleoplasmic relocalization and ubiquitin-mediated proteasomal degradation. Interacts with NPM1; the interaction is direct and competitive with MYC. Interacts with NF2 (via FERM domain); the interaction is direct. Interacts with p53/TP53 (via the oligomerization region); the interaction is direct and may prevent the MDM2-mediated proteasomal degradation of p53/TP53. Interacts with RIGI; may regulate RIGI through USP15-mediated 'Lys-63'-linked deubiquitination. Interacts with UBTF. In terms of processing, ubiquitin-mediated proteasomal degradation is regulated by c-JUN. It is associated with relocalization to the nucleoplasm and decreased homooligomerization. Post-translationally, phosphorylated upon DNA damage probably by ATM and DNA-PK; may regulate NOP53 degradation.

It is found in the nucleus. It localises to the nucleolus. The protein localises to the nucleoplasm. Its function is as follows. Nucleolar protein which is involved in the integration of the 5S RNP into the ribosomal large subunit during ribosome biogenesis. In ribosome biogenesis, may also play a role in rRNA transcription. Also functions as a nucleolar sensor that regulates the activation of p53/TP53 in response to ribosome biogenesis perturbation, DNA damage and other stress conditions. DNA damage or perturbation of ribosome biogenesis disrupt the interaction between NOP53 and RPL11 allowing RPL11 transport to the nucleoplasm where it can inhibit MDM2 and allow p53/TP53 activation. It may also positively regulate the function of p53/TP53 in cell cycle arrest and apoptosis through direct interaction, preventing its MDM2-dependent ubiquitin-mediated proteasomal degradation. Originally identified as a tumor suppressor, it may also play a role in cell proliferation and apoptosis by positively regulating the stability of PTEN, thereby antagonizing the PI3K-AKT/PKB signaling pathway. May also inhibit cell proliferation and increase apoptosis through its interaction with NF2. May negatively regulate NPM1 by regulating its nucleoplasmic localization, oligomerization and ubiquitin-mediated proteasomal degradation. Thereby, may prevent NPM1 interaction with MYC and negatively regulate transcription mediated by the MYC-NPM1 complex. May also regulate cellular aerobic respiration. In the cellular response to viral infection, may play a role in the attenuation of interferon-beta through the inhibition of RIGI. This Mus musculus (Mouse) protein is Ribosome biogenesis protein NOP53.